Here is a 178-residue protein sequence, read N- to C-terminus: MHSSALLCCLVVLTGVRASPGQGTQSENSCTRFPGNLPHMLRDLRDAFSRVKTFFQMKDQLDNILLKESLLEDFKGYLGCQALSEMIQFYLEEVMPQAENHDPDIKEHVNSLGENLKTLRLRLRRCHRFLPCENKSKAVEQVKNAFSKLQEKGVYKAMSEFDIFINYIEAYMTMKIQN.

The signal sequence occupies residues 1-18 (MHSSALLCCLVVLTGVRA). 2 disulfide bridges follow: C30/C126 and C80/C132. N134 carries an N-linked (GlcNAc...) asparagine glycan.

The protein belongs to the IL-10 family. In terms of assembly, homodimer. Interacts with IL10RA and IL10RB.

It localises to the secreted. In terms of biological role, major immune regulatory cytokine that acts on many cells of the immune system where it has profound anti-inflammatory functions, limiting excessive tissue disruption caused by inflammation. Mechanistically, IL10 binds to its heterotetrameric receptor comprising IL10RA and IL10RB leading to JAK1 and STAT2-mediated phosphorylation of STAT3. In turn, STAT3 translocates to the nucleus where it drives expression of anti-inflammatory mediators. Targets antigen-presenting cells (APCs) such as macrophages and monocytes and inhibits their release of pro-inflammatory cytokines including granulocyte-macrophage colony-stimulating factor /GM-CSF, granulocyte colony-stimulating factor/G-CSF, IL-1 alpha, IL-1 beta, IL-6, IL-8 and TNF-alpha. Also interferes with antigen presentation by reducing the expression of MHC-class II and co-stimulatory molecules, thereby inhibiting their ability to induce T cell activation. In addition, controls the inflammatory response of macrophages by reprogramming essential metabolic pathways including mTOR signaling. In Papio hamadryas (Hamadryas baboon), this protein is Interleukin-10 (IL10).